The primary structure comprises 303 residues: Glycine--tRNA ligase alpha subunit (303 aa).

It belongs to the class-II aminoacyl-tRNA synthetase family. As to quaternary structure, tetramer of two alpha and two beta subunits.

It localises to the cytoplasm. It carries out the reaction tRNA(Gly) + glycine + ATP = glycyl-tRNA(Gly) + AMP + diphosphate. This is Glycine--tRNA ligase alpha subunit from Erwinia tasmaniensis (strain DSM 17950 / CFBP 7177 / CIP 109463 / NCPPB 4357 / Et1/99).